A 78-amino-acid chain; its full sequence is DNA-directed RNA polymerase subunit Rpo5 (78 aa).

This sequence belongs to the archaeal Rpo5/eukaryotic RPB5 RNA polymerase subunit family. In terms of assembly, part of the RNA polymerase complex.

The protein localises to the cytoplasm. The catalysed reaction is RNA(n) + a ribonucleoside 5'-triphosphate = RNA(n+1) + diphosphate. In terms of biological role, DNA-dependent RNA polymerase (RNAP) catalyzes the transcription of DNA into RNA using the four ribonucleoside triphosphates as substrates. The sequence is that of DNA-directed RNA polymerase subunit Rpo5 from Methanocaldococcus jannaschii (strain ATCC 43067 / DSM 2661 / JAL-1 / JCM 10045 / NBRC 100440) (Methanococcus jannaschii).